We begin with the raw amino-acid sequence, 147 residues long: Large ribosomal subunit protein uL16 (147 aa).

This sequence belongs to the universal ribosomal protein uL16 family. Part of the 50S ribosomal subunit.

Binds 23S rRNA and is also seen to make contacts with the A and possibly P site tRNAs. This chain is Large ribosomal subunit protein uL16, found in Clostridium tetani (strain Massachusetts / E88).